Consider the following 299-residue polypeptide: Lymphocyte antigen 6 complex locus protein G6f (299 aa).

The signal sequence occupies residues 1–19 (MAVLFLLLLFLCGLPQAET). Positions 20–124 (DSIQAIYVVL…YRYQNWRVYD (105 aa)) constitute an Ig-like V-type domain. The Extracellular segment spans residues 20–237 (DSIQAIYVVL…APSADWDVAW (218 aa)). Cys-37 and Cys-108 are oxidised to a cystine. Residue Asn-90 is glycosylated (N-linked (GlcNAc...) asparagine). The chain crosses the membrane as a helical span at residues 238 to 258 (ILTLLLTVGQGFTIVVLGVML). Topologically, residues 259–299 (WRQRAQGAQHRNASFPQFKPEIQVYENIHLAHLSPPAPKTR) are cytoplasmic. Tyr-283 bears the Phosphotyrosine mark.

Homodimer; disulfide-linked. Interacts with GRB2 and GRB7 in a phosphorylation-dependent manner. N-glycosylated.

Its subcellular location is the cell membrane. May play a role in the downstream signal transduction pathways involving GRB2 and GRB7. This chain is Lymphocyte antigen 6 complex locus protein G6f (LY6G6F), found in Bos taurus (Bovine).